We begin with the raw amino-acid sequence, 408 residues long: UPF0496 protein At5g66670 (408 aa).

The next 2 helical transmembrane spans lie at 239–259 (VVFA…AAMM) and 262–282 (PVLS…GMWC).

This sequence belongs to the UPF0496 family.

The protein localises to the membrane. This is UPF0496 protein At5g66670 from Arabidopsis thaliana (Mouse-ear cress).